A 153-amino-acid polypeptide reads, in one-letter code: UPF0178 protein CC_1215 (153 aa).

Belongs to the UPF0178 family.

The protein is UPF0178 protein CC_1215 of Caulobacter vibrioides (strain ATCC 19089 / CIP 103742 / CB 15) (Caulobacter crescentus).